Reading from the N-terminus, the 659-residue chain is A-type ATP synthase subunit I (659 aa).

Helical transmembrane passes span 376-396 (FFFGFMLTDFVYGLLLGVISA), 415-435 (IMLWASAFTMVLGILFGSYCG), 460-480 (VMALAIGLGHLFTGYILGFIV), 489-509 (AAILEQLPWVFIIIGITLFAL), 513-533 (LGIPQIAFKAVFGVGLALFVV), 542-562 (MAVLLTISDFFGFIGNWLSYA), 566-586 (ALALATSGIALVINIIANMVW), and 590-610 (IGPIPLGILIGIVILIGGHIF).

This sequence belongs to the V-ATPase 116 kDa subunit family. In terms of assembly, has multiple subunits with at least A(3), B(3), C, D, E, F, H, I and proteolipid K(x).

Its subcellular location is the cell membrane. Its function is as follows. Component of the A-type ATP synthase that produces ATP from ADP in the presence of a proton gradient across the membrane. This Pyrococcus abyssi (strain GE5 / Orsay) protein is A-type ATP synthase subunit I.